The sequence spans 338 residues: Ketol-acid reductoisomerase (NADP(+)) (338 aa).

The 181-residue stretch at 1-181 (MNVYYDKDCD…GGGRSGIIET (181 aa)) folds into the KARI N-terminal Rossmann domain. Residues 24–27 (YGSQ), R47, S50, S52, and 82–85 (DEFQ) each bind NADP(+). Residue H107 is part of the active site. Residue G133 participates in NADP(+) binding. The region spanning 182-327 (TFKDETETDL…AKLRSMMPWI (146 aa)) is the KARI C-terminal knotted domain. 4 residues coordinate Mg(2+): D190, E194, E226, and E230. Substrate is bound at residue S251.

This sequence belongs to the ketol-acid reductoisomerase family. Requires Mg(2+) as cofactor.

The catalysed reaction is (2R)-2,3-dihydroxy-3-methylbutanoate + NADP(+) = (2S)-2-acetolactate + NADPH + H(+). The enzyme catalyses (2R,3R)-2,3-dihydroxy-3-methylpentanoate + NADP(+) = (S)-2-ethyl-2-hydroxy-3-oxobutanoate + NADPH + H(+). Its pathway is amino-acid biosynthesis; L-isoleucine biosynthesis; L-isoleucine from 2-oxobutanoate: step 2/4. The protein operates within amino-acid biosynthesis; L-valine biosynthesis; L-valine from pyruvate: step 2/4. Functionally, involved in the biosynthesis of branched-chain amino acids (BCAA). Catalyzes an alkyl-migration followed by a ketol-acid reduction of (S)-2-acetolactate (S2AL) to yield (R)-2,3-dihydroxy-isovalerate. In the isomerase reaction, S2AL is rearranged via a Mg-dependent methyl migration to produce 3-hydroxy-3-methyl-2-ketobutyrate (HMKB). In the reductase reaction, this 2-ketoacid undergoes a metal-dependent reduction by NADPH to yield (R)-2,3-dihydroxy-isovalerate. The polypeptide is Ketol-acid reductoisomerase (NADP(+)) (Psychrobacter sp. (strain PRwf-1)).